The sequence spans 186 residues: Adenylyl-sulfate kinase (186 aa).

G17–T24 is a binding site for ATP. S91 (phosphoserine intermediate) is an active-site residue.

This sequence belongs to the APS kinase family.

The enzyme catalyses adenosine 5'-phosphosulfate + ATP = 3'-phosphoadenylyl sulfate + ADP + H(+). It functions in the pathway sulfur metabolism; hydrogen sulfide biosynthesis; sulfite from sulfate: step 2/3. Functionally, catalyzes the synthesis of activated sulfate. This is Adenylyl-sulfate kinase from Chloroflexus aurantiacus (strain ATCC 29364 / DSM 637 / Y-400-fl).